The sequence spans 408 residues: Flavohemoprotein (408 aa).

The Globin domain occupies 1-138 (MLSEKTIRIV…LADIFIGREG (138 aa)). Heme b is bound at residue His85. Residues Tyr95 and Glu137 each act as charge relay system in the active site. Positions 149-408 (GGWNGTRTFV…FGPKEELVAV (260 aa)) are reductase. The region spanning 152 to 263 (NGTRTFVVTK…GPPCGEFTVD (112 aa)) is the FAD-binding FR-type domain. FAD contacts are provided by residues Tyr190 and 205-208 (RNYS). Residue 277-282 (GIGVTP) participates in NADP(+) binding. 398–401 (FFGP) is an FAD binding site.

This sequence belongs to the globin family. Two-domain flavohemoproteins subfamily. The protein in the C-terminal section; belongs to the flavoprotein pyridine nucleotide cytochrome reductase family. The cofactor is heme b. FAD serves as cofactor.

The catalysed reaction is 2 nitric oxide + NADPH + 2 O2 = 2 nitrate + NADP(+) + H(+). It catalyses the reaction 2 nitric oxide + NADH + 2 O2 = 2 nitrate + NAD(+) + H(+). The polypeptide is Flavohemoprotein (Rhodopirellula baltica (strain DSM 10527 / NCIMB 13988 / SH1)).